The following is a 256-amino-acid chain: 1-(5-phosphoribosyl)-5-[(5-phosphoribosylamino)methylideneamino] imidazole-4-carboxamide isomerase (256 aa).

D8 serves as the catalytic Proton acceptor. The active-site Proton donor is the D130.

This sequence belongs to the HisA/HisF family.

The protein resides in the cytoplasm. It catalyses the reaction 1-(5-phospho-beta-D-ribosyl)-5-[(5-phospho-beta-D-ribosylamino)methylideneamino]imidazole-4-carboxamide = 5-[(5-phospho-1-deoxy-D-ribulos-1-ylimino)methylamino]-1-(5-phospho-beta-D-ribosyl)imidazole-4-carboxamide. The protein operates within amino-acid biosynthesis; L-histidine biosynthesis; L-histidine from 5-phospho-alpha-D-ribose 1-diphosphate: step 4/9. The sequence is that of 1-(5-phosphoribosyl)-5-[(5-phosphoribosylamino)methylideneamino] imidazole-4-carboxamide isomerase from Chlorobium phaeobacteroides (strain DSM 266 / SMG 266 / 2430).